The chain runs to 661 residues: Peroxisomal acyl-coenzyme A oxidase 1 (661 aa).

Ser-26 carries the phosphoserine modification. N6-acetyllysine is present on Lys-65. Lys-89 bears the N6-succinyllysine mark. Residue Thr-139 participates in FAD binding. Lys-159 is modified (N6-succinyllysine). Gly-178 lines the FAD pocket. Position 216 is an N6-acetyllysine (Lys-216). Lys-241 is modified (N6-succinyllysine). N6-acetyllysine occurs at positions 255, 267, and 272. Lys-349 carries the post-translational modification N6-succinyllysine. The active-site Proton acceptor is Glu-421. Residues Lys-437 and Lys-446 each carry the N6-acetyllysine; alternate modification. 2 positions are modified to N6-succinyllysine; alternate: Lys-437 and Lys-446. Lys-500 carries the N6-acetyllysine modification. An N6-acetyllysine; alternate modification is found at Lys-512. Lys-512 is subject to N6-succinyllysine; alternate. N6-succinyllysine is present on Lys-542. An N6-acetyllysine; alternate modification is found at Lys-637. N6-succinyllysine; alternate is present on Lys-637. An N6-succinyllysine modification is found at Lys-643. The residue at position 649 (Ser-649) is a Phosphoserine. N6-acetyllysine is present on Lys-652. Position 655 is an N6-succinyllysine (Lys-655). A Microbody targeting signal motif is present at residues 659 to 661; that stretch reads SKL.

It belongs to the acyl-CoA oxidase family. Homodimer. Interacts with LONP2. It depends on FAD as a cofactor.

It localises to the peroxisome. The catalysed reaction is a 2,3-saturated acyl-CoA + O2 = a (2E)-enoyl-CoA + H2O2. The enzyme catalyses hexadecanoyl-CoA + O2 = (2E)-hexadecenoyl-CoA + H2O2. It carries out the reaction dodecanoyl-CoA + O2 = (2E)-dodecenoyl-CoA + H2O2. It catalyses the reaction octanoyl-CoA + O2 = (2E)-octenoyl-CoA + H2O2. The catalysed reaction is decanoyl-CoA + O2 = (2E)-decenoyl-CoA + H2O2. The enzyme catalyses tetradecanoyl-CoA + O2 = (2E)-tetradecenoyl-CoA + H2O2. It carries out the reaction hexadecanedioyl-CoA + O2 = (2E)-hexadecenedioyl-CoA + H2O2. It catalyses the reaction tetracosanoyl-CoA + O2 = (2E)-tetracosenoyl-CoA + H2O2. The catalysed reaction is glutaryl-CoA + O2 = (2E)-glutaconyl-CoA + H2O2. The enzyme catalyses hexanoyl-CoA + O2 = (2E)-hexenoyl-CoA + H2O2. It carries out the reaction octadecanoyl-CoA + O2 = (2E)-octadecenoyl-CoA + H2O2. It catalyses the reaction (5Z,8Z,11Z,14Z,17Z)-eicosapentaenoyl-CoA + O2 = (2E,5Z,8Z,11Z,14Z,17Z)-icosahexaenoyl-CoA + H2O2. The catalysed reaction is (6Z,9Z,12Z,15Z,18Z,21Z)-tetracosahexaenoyl-CoA + O2 = (2E,6Z,9Z,12Z,15Z,18Z,21Z)-tetracosaheptaenoyl-CoA + H2O2. Its pathway is lipid metabolism; peroxisomal fatty acid beta-oxidation. Its function is as follows. Involved in the initial and rate-limiting step of peroxisomal beta-oxidation of straight-chain saturated and unsaturated very-long-chain fatty acids. Catalyzes the desaturation of fatty acyl-CoAs such as palmitoyl-CoA (hexadecanoyl-CoA) to 2-trans-enoyl-CoAs ((2E)-enoyl-CoAs) such as (2E)-hexadecenoyl-CoA, and donates electrons directly to molecular oxygen (O(2)), thereby producing hydrogen peroxide (H(2)O(2)). In Cavia porcellus (Guinea pig), this protein is Peroxisomal acyl-coenzyme A oxidase 1.